The primary structure comprises 381 residues: GDSL esterase/lipase At3g48460 (381 aa).

The N-terminal stretch at 1-26 is a signal peptide; sequence MSSSISPLLTTAISVAILLFSTISTA. Catalysis depends on Ser-45, which acts as the Nucleophile. Asn-112, Asn-140, and Asn-258 each carry an N-linked (GlcNAc...) asparagine glycan. Active-site residues include Asp-344 and His-347.

It belongs to the 'GDSL' lipolytic enzyme family.

It is found in the secreted. The sequence is that of GDSL esterase/lipase At3g48460 from Arabidopsis thaliana (Mouse-ear cress).